Here is a 162-residue protein sequence, read N- to C-terminus: Nucleotide-binding protein SAV_4896 (162 aa).

It belongs to the YajQ family.

In terms of biological role, nucleotide-binding protein. The sequence is that of Nucleotide-binding protein SAV_4896 from Streptomyces avermitilis (strain ATCC 31267 / DSM 46492 / JCM 5070 / NBRC 14893 / NCIMB 12804 / NRRL 8165 / MA-4680).